A 348-amino-acid chain; its full sequence is tRNA N6-adenosine threonylcarbamoyltransferase (348 aa).

Residues histidine 116 and histidine 120 each coordinate Fe cation. Residues 138-142 (QVSGG), aspartate 171, glycine 184, aspartate 188, and asparagine 277 each bind substrate. Aspartate 309 contacts Fe cation.

The protein belongs to the KAE1 / TsaD family. Fe(2+) is required as a cofactor.

It is found in the cytoplasm. The catalysed reaction is L-threonylcarbamoyladenylate + adenosine(37) in tRNA = N(6)-L-threonylcarbamoyladenosine(37) in tRNA + AMP + H(+). In terms of biological role, required for the formation of a threonylcarbamoyl group on adenosine at position 37 (t(6)A37) in tRNAs that read codons beginning with adenine. Is involved in the transfer of the threonylcarbamoyl moiety of threonylcarbamoyl-AMP (TC-AMP) to the N6 group of A37, together with TsaE and TsaB. TsaD likely plays a direct catalytic role in this reaction. The sequence is that of tRNA N6-adenosine threonylcarbamoyltransferase from Lactobacillus gasseri (strain ATCC 33323 / DSM 20243 / BCRC 14619 / CIP 102991 / JCM 1131 / KCTC 3163 / NCIMB 11718 / NCTC 13722 / AM63).